A 338-amino-acid polypeptide reads, in one-letter code: Glyceraldehyde-3-phosphate dehydrogenase (338 aa).

NAD(+)-binding positions include 11-12 and Gly-109; that span reads TI. 138 to 140 provides a ligand contact to D-glyceraldehyde 3-phosphate; sequence SCN. Cys-139 (nucleophile) is an active-site residue. Arg-167 lines the NAD(+) pocket. D-glyceraldehyde 3-phosphate contacts are provided by residues Thr-169 and 192 to 193; that span reads HA. Gln-299 contacts NAD(+).

Belongs to the glyceraldehyde-3-phosphate dehydrogenase family. Homotetramer.

It is found in the cytoplasm. The catalysed reaction is D-glyceraldehyde 3-phosphate + phosphate + NADP(+) = (2R)-3-phospho-glyceroyl phosphate + NADPH + H(+). The enzyme catalyses D-glyceraldehyde 3-phosphate + phosphate + NAD(+) = (2R)-3-phospho-glyceroyl phosphate + NADH + H(+). Its pathway is carbohydrate degradation; glycolysis; pyruvate from D-glyceraldehyde 3-phosphate: step 1/5. This is Glyceraldehyde-3-phosphate dehydrogenase from Thermoplasma volcanium (strain ATCC 51530 / DSM 4299 / JCM 9571 / NBRC 15438 / GSS1).